The following is a 201-amino-acid chain: Coiled-coil domain-containing protein 195 (201 aa).

Residues 4–38 (DIQLMRLIQEMRAEIHKLEKENQALRMKLTASSQR) are a coiled coil. 2 disordered regions span residues 28 to 72 (LRMK…DAAP) and 179 to 201 (SKNS…IIAE). The span at 179-188 (SKNSSSLKHS) shows a compositional bias: low complexity. The span at 189-201 (PNQATNQLSIIAE) shows a compositional bias: polar residues.

The protein is Coiled-coil domain-containing protein 195 of Homo sapiens (Human).